The primary structure comprises 273 residues: NADPH-dependent 7-cyano-7-deazaguanine reductase (273 aa).

81 to 83 is a substrate binding site; that stretch reads VES. 83–84 serves as a coordination point for NADPH; the sequence is SK. The active-site Thioimide intermediate is the Cys179. The active-site Proton donor is the Asp186. 218-219 is a substrate binding site; sequence AE. Residue 247-248 participates in NADPH binding; it reads RG.

This sequence belongs to the GTP cyclohydrolase I family. QueF type 2 subfamily. As to quaternary structure, homodimer.

It localises to the cytoplasm. It carries out the reaction 7-aminomethyl-7-carbaguanine + 2 NADP(+) = 7-cyano-7-deazaguanine + 2 NADPH + 3 H(+). It participates in tRNA modification; tRNA-queuosine biosynthesis. Its function is as follows. Catalyzes the NADPH-dependent reduction of 7-cyano-7-deazaguanine (preQ0) to 7-aminomethyl-7-deazaguanine (preQ1). The protein is NADPH-dependent 7-cyano-7-deazaguanine reductase of Rickettsia canadensis (strain McKiel).